A 222-amino-acid polypeptide reads, in one-letter code: Ornithine decarboxylase antizyme 1 (222 aa).

The protein belongs to the ODC antizyme family. In terms of assembly, interacts with ODC1 and thereby sterically blocks ODC homodimerization. Forms a ternary complex with PSMB4 and OAZ1 before PSMB4 is incorporated into the 20S proteasome. Interacts with AZIN2; this interaction disrupts the interaction between the antizyme and ODC1. Interacts with FAM171A1.

In terms of biological role, ornithine decarboxylase (ODC) antizyme protein that negatively regulates ODC activity and intracellular polyamine biosynthesis and uptake in response to increased intracellular polyamine levels. Binds to ODC monomers, inhibiting the assembly of the functional ODC homodimer, and targets the monomers for ubiquitin-independent proteolytic destruction by the 26S proteasome. Triggers ODC degradation by inducing the exposure of a cryptic proteasome-interacting surface of ODC. Stabilizes AZIN2 by interfering with its ubiquitination. Also inhibits cellular uptake of polyamines by inactivating the polyamine uptake transporter. SMAD1/OAZ1/PSMB4 complex mediates the degradation of the CREBBP/EP300 repressor SNIP1. Involved in the translocation of AZIN2 from ER-Golgi intermediate compartment (ERGIC) to the cytosol. The sequence is that of Ornithine decarboxylase antizyme 1 (OAZ1) from Mesocricetus auratus (Golden hamster).